Consider the following 397-residue polypeptide: Ubiquitin-like modifier-activating enzyme 5 (397 aa).

ATP contacts are provided by Gly-76, Asp-97, Lys-120, Asn-143, and Asn-177. Residues Cys-219 and Cys-222 each coordinate Zn(2+). Catalysis depends on Cys-243, which acts as the Glycyl thioester intermediate. Zn(2+) contacts are provided by Cys-296 and Cys-301. Positions 327–339 (IVHEDNDWGIELV) match the UFM1-interacting sequence (UIS) motif. The segment at 340–370 (SETTEDELKAASGPVPDLPVGITVAYTIPNK) is linker. The short motif at 382-397 (ESEESLEDLMAKMRNL) is the UFC1-binding sequence (UFC) element.

Belongs to the ubiquitin-activating E1 family. UBA5 subfamily. In terms of assembly, homodimer; homodimerization is required for UFM1 activation. Interacts (via UIS motif) with UFM1; binds UFM1 via a trans-binding mechanism in which UFM1 interacts with distinct sites in both subunits of the UBA5 homodimer. Interacts (via C-terminus) with UFC1.

The protein resides in the cytoplasm. It localises to the nucleus. The protein localises to the endoplasmic reticulum membrane. Its subcellular location is the golgi apparatus. Functionally, E1-like enzyme which specifically catalyzes the first step in ufmylation. Activates UFM1 by first adenylating its C-terminal glycine residue with ATP, and thereafter linking this residue to the side chain of a cysteine residue in E1, yielding a UFM1-E1 thioester and free AMP. Activates UFM1 via a trans-binding mechanism, in which UFM1 interacts with distinct sites in both subunits of the UBA5 homodimer. Trans-binding also promotes stabilization of the UBA5 homodimer, and enhances ATP-binding. Transfer of UFM1 from UBA5 to the E2-like enzyme UFC1 also takes place using a trans mechanism. Ufmylation plays a key role in various processes, such as ribosome recycling, response to DNA damage, interferon response or reticulophagy (also called ER-phagy). In Gallus gallus (Chicken), this protein is Ubiquitin-like modifier-activating enzyme 5.